The sequence spans 196 residues: Dehydrogenase RED3 (196 aa).

NADP(+) contacts are provided by Ser47, Asp74, Asn101, Arg134, Tyr166, and Lys170. Tyr166 (proton acceptor) is an active-site residue. Residue Lys170 is the Lowers pKa of active site Tyr of the active site.

The protein belongs to the short-chain dehydrogenases/reductases (SDR) family.

The catalysed reaction is a primary alcohol + NAD(+) = an aldehyde + NADH + H(+). The enzyme catalyses a secondary alcohol + NAD(+) = a ketone + NADH + H(+). The protein operates within mycotoxin biosynthesis. Its function is as follows. Dehydrogenase; part of the Tox1B locus, one of the 2 loci that mediate the biosynthesis of T-toxin, a family of linear polyketides 37 to 45 carbons in length, of which the major component is 41 carbons, and which leads to high virulence to maize. One of the PKSs (PKS1 or PKS2) could synthesize a precursor, used subsequently by the other PKS as starter unit, to add additional carbons. Variability in the length of the final carbon backbone C35-47 could be achieved by varying the number of condensation cycles, or use of different starter or extender units or might be due to decarboxylation of the penultimate product, catalyzed by DEC1. Additional proteins are required for the biosynthesis of T-toxin, including oxidoreductases RED1, RED2, RED3, LAM1 and OXI1, as well as esterase TOX9. The chain is Dehydrogenase RED3 from Cochliobolus heterostrophus (strain C4 / ATCC 48331 / race T) (Southern corn leaf blight fungus).